The primary structure comprises 215 residues: MRIGILGGTFDPIHYGHIRPAIEVKEALGLDKVLLMPNHIPPHKHQPNLSTAQRLKMVADVCAELAGFELCDIEANRDTPSYTVVTLEQLSTQYPNAELFFIMGMDSFIHLQSWHKWQQIFGFANLVLCQRPGWHLSNEHPMQQVLMERSAAIDTLKNPPQKHYPIHGRIFTVDITPQDISSTQIRSALAIGKIPTDALMPVTLNYIQKQQLYLS.

This sequence belongs to the NadD family.

It catalyses the reaction nicotinate beta-D-ribonucleotide + ATP + H(+) = deamido-NAD(+) + diphosphate. The protein operates within cofactor biosynthesis; NAD(+) biosynthesis; deamido-NAD(+) from nicotinate D-ribonucleotide: step 1/1. In terms of biological role, catalyzes the reversible adenylation of nicotinate mononucleotide (NaMN) to nicotinic acid adenine dinucleotide (NaAD). The polypeptide is Probable nicotinate-nucleotide adenylyltransferase (Shewanella sp. (strain W3-18-1)).